The sequence spans 421 residues: Probable N-acetylgalactosaminyltransferase 8 (421 aa).

Residues 1–3 (MRR) lie on the Cytoplasmic side of the membrane. A helical; Signal-anchor for type II membrane protein membrane pass occupies residues 4 to 24 (HVVLSIFVFAGIVFAAEEAEK). The Lumenal portion of the chain corresponds to 25–421 (LPKCEHVDPY…ELEPKVHDEL (397 aa)). N-linked (GlcNAc...) asparagine glycans are attached at residues N52 and N58. Disulfide bonds link C98–C331 and C322–C399. Residues 106-219 (SYSTSVVVIH…ERWLEPLLQP (114 aa)) are catalytic subdomain A. Substrate-binding residues include D147 and R180. D203 provides a ligand contact to Mn(2+). S204 provides a ligand contact to substrate. H205 is a Mn(2+) binding site. A catalytic subdomain B region spans residues 277-339 (PFNSPAMPGG…PCSRVGHVFR (63 aa)). Residue W308 participates in substrate binding. Mn(2+) is bound at residue H336. Residues R339 and Y344 each contribute to the substrate site. Positions 418–421 (HDEL) match the Prevents secretion from ER motif.

Belongs to the glycosyltransferase 2 family. GalNAc-T subfamily. Mn(2+) serves as cofactor.

Its subcellular location is the golgi apparatus membrane. It participates in protein modification; protein glycosylation. In terms of biological role, potential glycopeptide transferase involved in O-linked oligosaccharide biosynthesis. In contrast to other members of the family, it does not act as a peptide transferase that transfers GalNAc onto serine or threonine residue on peptides that have been tested. Some peptide transferase activity is however not excluded, considering that its appropriate peptide substrate may remain unidentified. In Caenorhabditis elegans, this protein is Probable N-acetylgalactosaminyltransferase 8 (gly-8).